The sequence spans 358 residues: Chorismate synthase (358 aa).

Arginine 46 contacts NADP(+). FMN contacts are provided by residues 123–125 (RSS), 235–236 (NA), glycine 275, 290–294 (KPTPS), and arginine 316.

The protein belongs to the chorismate synthase family. Homotetramer. The cofactor is FMNH2.

The enzyme catalyses 5-O-(1-carboxyvinyl)-3-phosphoshikimate = chorismate + phosphate. It functions in the pathway metabolic intermediate biosynthesis; chorismate biosynthesis; chorismate from D-erythrose 4-phosphate and phosphoenolpyruvate: step 7/7. In terms of biological role, catalyzes the anti-1,4-elimination of the C-3 phosphate and the C-6 proR hydrogen from 5-enolpyruvylshikimate-3-phosphate (EPSP) to yield chorismate, which is the branch point compound that serves as the starting substrate for the three terminal pathways of aromatic amino acid biosynthesis. This reaction introduces a second double bond into the aromatic ring system. The protein is Chorismate synthase of Helicobacter hepaticus (strain ATCC 51449 / 3B1).